We begin with the raw amino-acid sequence, 304 residues long: Homoserine O-acetyltransferase (304 aa).

Residue Cys-142 is the Acyl-thioester intermediate of the active site. The substrate site is built by Lys-163 and Ser-191. The Proton acceptor role is filled by His-234. Glu-236 is a catalytic residue. Arg-248 contacts substrate.

This sequence belongs to the MetA family.

The protein localises to the cytoplasm. It carries out the reaction L-homoserine + acetyl-CoA = O-acetyl-L-homoserine + CoA. It participates in amino-acid biosynthesis; L-methionine biosynthesis via de novo pathway; O-acetyl-L-homoserine from L-homoserine: step 1/1. Functionally, transfers an acetyl group from acetyl-CoA to L-homoserine, forming acetyl-L-homoserine. The chain is Homoserine O-acetyltransferase from Thermotoga petrophila (strain ATCC BAA-488 / DSM 13995 / JCM 10881 / RKU-1).